Reading from the N-terminus, the 1143-residue chain is Disease resistance protein Pikm1-TS (1143 aa).

The interval 1–190 is structured coiled coil (CC) domain; it reads MEAAAMAVTA…PLRIMGGEMQ (190 aa). Positions 189 to 258 constitute an HMA domain; that stretch reads MQKIVFKIPM…KVGPAMFLEV (70 aa). Residues 191 to 264 form an HMA-like domain region; the sequence is KIVFKIPMVD…FLEVSQVKED (74 aa). The NB-ARC domain occupies 282–570; the sequence is HEVKTICILG…WIAEGFVSEE (289 aa). LRR repeat units follow at residues 681-706, 708-731, 732-754, 756-777, 778-800, 802-823, 824-848, 945-968, 979-1002, and 1004-1027; these read FKRLRVLDLEDNKDIQDSHLQGICEQ, SLRVRYLGLKGTRIRKLPQEMRKL, KHLEILYVGSTRISELPQEIGEL, HLRILDVRNTDITELPLQIREL, QHLHTLDVRNTPISELPPQVGKL, NLKIMCVRSTGVRELPKEIGEL, NHLQTLDVRNTRVRELPWQAGQISQ, MPNLQTLVLRFEALPRQPITINGT, DSRVPRIAFHEDAMPNLKLLEFKF, and AGPASNDAIGITNLKSLQKVVFRC.

The protein belongs to the disease resistance NB-LRR family. In terms of assembly, interacts with AVR-Pik through its N-terminal part containing the HMA-like domain. As to expression, constitutively expressed.

Disease resistance (R) protein that specifically recognizes the AVR-Pik effector avirulence protein from M.oryzae. Resistance proteins guard the plant against pathogens that contain an appropriate avirulence protein via an indirect interaction with this avirulence protein. That triggers a defense system including the hypersensitive response, which restricts the pathogen growth. Contribution of Pikm-2 is required to recognize the effector avirulence protein AVR-Pik. In Oryza sativa subsp. japonica (Rice), this protein is Disease resistance protein Pikm1-TS.